The sequence spans 143 residues: Large ribosomal subunit protein uL16c (143 aa).

This sequence belongs to the universal ribosomal protein uL16 family. As to quaternary structure, part of the 50S ribosomal subunit.

The protein localises to the plastid. It is found in the chloroplast. This Cyanidioschyzon merolae (strain NIES-3377 / 10D) (Unicellular red alga) protein is Large ribosomal subunit protein uL16c.